A 584-amino-acid polypeptide reads, in one-letter code: 4-hydroxybenzoate decarboxylase subunit C (584 aa).

It belongs to the UbiD family. In terms of assembly, component of the decarboxylase complex composed of the subunits B and C (Potential). The subunit D usually found in other organisms seems to be absent.

The catalysed reaction is 4-hydroxybenzoate + H(+) = phenol + CO2. The enzyme activity is enhanced by Mg(2+), Fe(2+), Mn(2+) and Ca(2+). No stimulation is observed with Cu(2+) and Zn(2+). Catalyzes the reversible decarboxylation of 4-hydroxybenzoate. This chain is 4-hydroxybenzoate decarboxylase subunit C, found in Chlamydia pneumoniae (Chlamydophila pneumoniae).